Reading from the N-terminus, the 439-residue chain is Xylose isomerase (439 aa).

Residues H101 and D104 contribute to the active site. Mg(2+) is bound by residues E232, E268, H271, D296, D307, D309, and D339.

It belongs to the xylose isomerase family. Homotetramer. Mg(2+) serves as cofactor.

Its subcellular location is the cytoplasm. The enzyme catalyses alpha-D-xylose = alpha-D-xylulofuranose. The protein is Xylose isomerase of Haemophilus influenzae (strain PittEE).